The sequence spans 359 residues: EGF-like domain containing protein 2 (359 aa).

The first 20 residues, 1-20 (MPPFISHFFLLSTFASLALC), serve as a signal peptide directing secretion. 2 consecutive EGF-like domains span residues 21–55 (SFYC…FNCG) and 61–93 (ISAA…PTCQ). Disulfide bonds link Cys24–Cys37, Cys31–Cys43, Cys45–Cys54, Cys65–Cys75, Cys69–Cys81, and Cys83–Cys92.

As to expression, prismatic layer of shell (at protein level). Expressed primarily in the mantle with highest level in the mantle edge and lower level in the mantle pallium.

It localises to the secreted. The chain is EGF-like domain containing protein 2 from Margaritifera margaritifera (Freshwater pearl mussel).